The following is a 481-amino-acid chain: UDP-N-acetylmuramoyl-L-alanyl-D-glutamate--L-lysine ligase (481 aa).

Ser-42 provides a ligand contact to UDP-N-acetyl-alpha-D-muramoyl-L-alanyl-D-glutamate. ATP is bound at residue 118–124; that stretch reads GTKGKTT. Residues Gln-158, 160–161, Ser-187, and Arg-195 contribute to the UDP-N-acetyl-alpha-D-muramoyl-L-alanyl-D-glutamate site; that span reads TT. Residue Lys-229 is modified to N6-carboxylysine. The L-lysine recognition motif motif lies at 404 to 407; the sequence is DDPN.

Belongs to the MurCDEF family. MurE subfamily. Post-translationally, carboxylation is probably crucial for Mg(2+) binding and, consequently, for the gamma-phosphate positioning of ATP.

Its subcellular location is the cytoplasm. It catalyses the reaction UDP-N-acetyl-alpha-D-muramoyl-L-alanyl-D-glutamate + L-lysine + ATP = UDP-N-acetyl-alpha-D-muramoyl-L-alanyl-gamma-D-glutamyl-L-lysine + ADP + phosphate + H(+). It participates in cell wall biogenesis; peptidoglycan biosynthesis. Catalyzes the addition of L-lysine to the nucleotide precursor UDP-N-acetylmuramoyl-L-alanyl-D-glutamate (UMAG) in the biosynthesis of bacterial cell-wall peptidoglycan. This chain is UDP-N-acetylmuramoyl-L-alanyl-D-glutamate--L-lysine ligase, found in Streptococcus pyogenes serotype M28 (strain MGAS6180).